A 486-amino-acid chain; its full sequence is Malonate-semialdehyde dehydrogenase (486 aa).

NAD(+) is bound by residues phenylalanine 154, lysine 178, glutamate 181, arginine 182, and serine 231. Catalysis depends on cysteine 286, which acts as the Nucleophile. NAD(+) is bound at residue glutamate 386.

It belongs to the aldehyde dehydrogenase family. IolA subfamily. Homotetramer.

The enzyme catalyses 3-oxopropanoate + NAD(+) + CoA + H2O = hydrogencarbonate + acetyl-CoA + NADH + H(+). It carries out the reaction 2-methyl-3-oxopropanoate + NAD(+) + CoA + H2O = propanoyl-CoA + hydrogencarbonate + NADH + H(+). It participates in polyol metabolism; myo-inositol degradation into acetyl-CoA; acetyl-CoA from myo-inositol: step 7/7. Catalyzes the oxidation of malonate semialdehyde (MSA) and methylmalonate semialdehyde (MMSA) into acetyl-CoA and propanoyl-CoA, respectively. Is involved in a myo-inositol catabolic pathway. Bicarbonate, and not CO2, is the end-product of the enzymatic reaction. The chain is Malonate-semialdehyde dehydrogenase from Bacillus cereus (strain G9842).